The primary structure comprises 610 residues: Probable pleckstrin homology domain-containing family N member 1 (610 aa).

The interval 1–30 (MGNSHCVPQAPRRLRASFSRKPSLKGNRED) is disordered. Residue Gly-2 is the site of N-myristoyl glycine attachment. Positions 61–100 (TDIPGPEHHPENLEQPFLSVFKKGWRRTPVRNLGKVVHYS) are interaction with C1QBP. PH domains are found at residues 96–192 (VVHY…MALL) and 227–324 (AICA…SRRD). Position 307 is a phosphotyrosine (Tyr-307). Disordered stretches follow at residues 327–357 (HLPP…SNGR), 371–431 (QSLP…PLPL), 443–473 (LDSG…ATSR), and 493–610 (PGPD…IQWI). Polar residues-rich tracts occupy residues 371 to 380 (QSLPESSVPT) and 391 to 402 (NQTDSNCVSTGQ). Tyr-462 bears the Phosphotyrosine mark. A compositionally biased stretch (low complexity) spans 504–526 (VSVSVPVSESSSGISSSPGPLGS).

Found in a complex with cytochrome c mRNA and various ribosomal proteins. Interacts with C1QBP, ELAVL1 and BID. In terms of processing, phosphorylation is essential for its mitochondrial localization and regulates its interaction with C1QBP. Testis and adipose tissue (at protein level). Ubiquitous.

It is found in the cell membrane. The protein localises to the mitochondrion membrane. It localises to the mitochondrion. Its function is as follows. Controls the stability of the leptin mRNA harboring an AU-rich element (ARE) in its 3' UTR, in cooperation with the RNA stabilizer ELAVL1. Decreases the stability of the leptin mRNA by antagonizing the function of ELAVL1 by inducing its atypical recruitment from the nucleus to the cytosol. Binds to cardiolipin (CL), phosphatidic acid (PA), phosphatidylinositol 4-phosphate (PtdIns(4)P) and phosphatidylserine (PS). In Mus musculus (Mouse), this protein is Probable pleckstrin homology domain-containing family N member 1 (Plekhn1).